The primary structure comprises 251 residues: HTH-type transcriptional regulator UlaR (251 aa).

An HTH deoR-type domain is found at 3–58; the sequence is EAQRHQILLDMLAQLGFVTVENVIERLGISPATARRDINKLDESGKLKKVRNGAEA. A DNA-binding region (H-T-H motif) is located at residues 20–39; sequence VTVENVIERLGISPATARRD.

Its subcellular location is the cytoplasm. Represses ulaG and the ulaABCDEF operon. This is HTH-type transcriptional regulator UlaR from Salmonella arizonae (strain ATCC BAA-731 / CDC346-86 / RSK2980).